A 72-amino-acid polypeptide reads, in one-letter code: uncharacterized protein (72 aa).

A helical transmembrane segment spans residues 11 to 31 (WCCTVLSAFGVVILSVIAHLF).

The protein localises to the membrane. This is an uncharacterized protein from Saccharomyces cerevisiae (strain ATCC 204508 / S288c) (Baker's yeast).